The primary structure comprises 52 residues: Large ribosomal subunit protein bL33 (52 aa).

It belongs to the bacterial ribosomal protein bL33 family.

The chain is Large ribosomal subunit protein bL33 from Helicobacter acinonychis (strain Sheeba).